The chain runs to 59 residues: Protein SspF (59 aa).

This sequence belongs to the alpha/beta-type SASP family.

In terms of biological role, may play some important role in either sporulation or the dormant spore. This is Protein SspF (sspF) from Bacillus cereus (strain ATCC 14579 / DSM 31 / CCUG 7414 / JCM 2152 / NBRC 15305 / NCIMB 9373 / NCTC 2599 / NRRL B-3711).